The following is a 1290-amino-acid chain: Alpha-factor-transporting ATPase (1290 aa).

Residues 1-25 (MNFLSFKTTKHYHIFRYVNIRNDYR) lie on the Cytoplasmic side of the membrane. Residues 26-46 (LLMIMIIGTVATGLVPAITSI) form a helical membrane-spanning segment. In terms of domain architecture, ABC transmembrane type-1 1 spans 27–319 (LMIMIIGTVA…TLHQIVVLQK (293 aa)). The Extracellular portion of the chain corresponds to 47–75 (LTGRVFDLLSVFVANGSHQGLYSQLVQRS). N-linked (GlcNAc...) asparagine glycosylation occurs at Asn61. Residues 76–96 (MAVMALGAASVPVMWLSLTSW) form a helical membrane-spanning segment. Topologically, residues 97-150 (MHIGERQGFRIRSQILEAYLEEKPMEWYDNNEKLLGDFTQINRCVEELRSSSAE) are cytoplasmic. Residues 151–171 (ASAITFQNLVAICALLGTSFY) traverse the membrane as a helical segment. The Extracellular segment spans residues 172–173 (YS). Residues 174 to 194 (WSLTLIILCSSPIITFFAVVF) form a helical membrane-spanning segment. Topologically, residues 195–262 (SRMIHVYSEK…SCFFVAANAG (68 aa)) are cytoplasmic. A helical membrane pass occupies residues 263–283 (ILRFLTLTMFVQGFWFGSAMI). The Extracellular segment spans residues 284-296 (KKGKLNINDVITC). Residues 297 to 317 (FHSCIMLGSTLNNTLHQIVVL) form a helical membrane-spanning segment. Residues 318-715 (QKGGVAMEKI…RMIKSIRYKK (398 aa)) are Cytoplasmic-facing. In terms of domain architecture, ABC transporter 1 spans 357–603 (LTFANVSFSY…PTTTFSTWYH (247 aa)). 392–399 (GKSGSGKS) is an ATP binding site. Residues 716–736 (ILILGLLCSLIAGATNPVFSY) form a helical membrane-spanning segment. The region spanning 717–1007 (LILGLLCSLI…LVSQIPDISR (291 aa)) is the ABC transmembrane type-1 2 domain. Residues 737-763 (TFSFLLEGIVPSTDGKTGSSHYLAKWS) lie on the Extracellular side of the membrane. The helical transmembrane segment at 764–784 (LLVLGVAAADGIFNFAKGFLL) threads the bilayer. Topologically, residues 785–838 (DCCSEYWVMDLRNEVMEKLTRKNMDWFSGENNKASEISALVLNDLRDLRSLVSE) are cytoplasmic. Residues 839–859 (FLSAMTSFVTVSTIGLIWALV) traverse the membrane as a helical segment. Topologically, residues 860 to 865 (SGWKLS) are extracellular. The helical transmembrane segment at 866 to 886 (LVCISMFPLIIIFSAIYGGIL) threads the bilayer. The Cytoplasmic portion of the chain corresponds to 887-945 (QKCETDYKTSVAQLENCLYQIVTNIKTIKCLQAEFHFQLTYHDLKIKMQQIASKRAIAT). Residues 946 to 966 (GFGISMTNMIVMCIQAIIYYY) traverse the membrane as a helical segment. Topologically, residues 967 to 981 (GLKLVMIHEYTSKEM) are extracellular. A helical membrane pass occupies residues 982-1002 (FTTFTLLLFTIMSCTSLVSQI). The Cytoplasmic portion of the chain corresponds to 1003-1290 (PDISRGQRAA…LFQIVSNQSS (288 aa)). A Glycyl lysine isopeptide (Lys-Gly) (interchain with G-Cter in ubiquitin) cross-link involves residue Lys1022. The ABC transporter 2 domain maps to 1052-1287 (VSIQNLTFAY…RGELFQIVSN (236 aa)). An ATP-binding site is contributed by 1087-1094 (GESGTGKS).

Belongs to the ABC transporter superfamily. Alpha-factor sex pheromone exporter (TC 3.A.1.206) family. Degraded via the ubiquitin system.

The protein resides in the membrane. The enzyme catalyses an [alpha-factor](in) + ATP + H2O = an [alpha-factor](out) + ADP + phosphate + H(+). Functionally, STE6 is required in yeast MATA cells for production of A-factor pheromone. STE6 is involved in the transport of the farnesyl-derivation of the A-factor pheromone. This is Alpha-factor-transporting ATPase (STE6) from Saccharomyces cerevisiae (strain ATCC 204508 / S288c) (Baker's yeast).